The chain runs to 115 residues: Large ribosomal subunit protein bL19 (115 aa).

The protein belongs to the bacterial ribosomal protein bL19 family.

This protein is located at the 30S-50S ribosomal subunit interface and may play a role in the structure and function of the aminoacyl-tRNA binding site. This is Large ribosomal subunit protein bL19 from Streptococcus pneumoniae (strain JJA).